Reading from the N-terminus, the 842-residue chain is Probable receptor-like protein kinase At5g61350 (842 aa).

Positions 1–27 (MGGDFRHFSSHVSLLLLFLLIVKSSSS) are cleaved as a signal peptide. At 28 to 425 (FTPADNYLID…IGGMSSKKLA (398 aa)) the chain is on the extracellular side. N-linked (GlcNAc...) asparagine glycans are attached at residues asparagine 81, asparagine 125, asparagine 252, asparagine 294, asparagine 359, and asparagine 365. The chain crosses the membrane as a helical span at residues 426–446 (IAGIGFVMALTAFLGVVVLLV). Residues 447-842 (RWQRRPKDWQ…EMQSPSHSIP (396 aa)) are Cytoplasmic-facing. Residues 525–803 (FDENAVCGVG…GDVLWNLEYA (279 aa)) enclose the Protein kinase domain. ATP-binding positions include 531-539 (CGVGGFGKV) and lysine 553. Residue aspartate 655 is the Proton acceptor of the active site.

Belongs to the protein kinase superfamily. Ser/Thr protein kinase family.

Its subcellular location is the membrane. The sequence is that of Probable receptor-like protein kinase At5g61350 from Arabidopsis thaliana (Mouse-ear cress).